A 266-amino-acid chain; its full sequence is Zinc finger protein SNAI2 (266 aa).

Positions 1–20 are SNAG domain; that stretch reads MPRSFLVKKHFNSAKKPNYG. Residues 75-115 are disordered; sequence SGYPSSLGRVSPPPQSDTSSKDHSGSESPISDEEERLQTKL. 4 C2H2-type zinc fingers span residues 126-148, 157-179, 183-205, and 211-233; these read FQCS…KQLH, FSCK…IRTH, CVCK…IRTH, and FSCP…LQTH. The C2H2-type 5; atypical zinc finger occupies 239 to 262; it reads YQCKNCSKTFSRMSLLHKHEESGC.

The protein belongs to the snail C2H2-type zinc-finger protein family. As to quaternary structure, interacts (via SNAG domain) with limd1 (via LIM domains), wtip (via LIM domains) and ajuba (via LIM domains). Interacts with elp3. As to expression, first expressed on the lateral side of stage 12 embryos. At stage 14, strongly expressed in the lateral neural folds. At stage 16, expressed in pre-migratory neural crest cells. At stage 18, expression is dispersed over the neural plate in a pattern surrounding the rhombomeres. At stage 22, expressed in neural crest derivatives, including the branchial arches and the tissues surrounding the eyes and forebrain. After stage 17, expression is weak in the lateral plate mesoderm, increasing at stage 26, but was down-regulated in the pronephros region at stage 26.

The protein localises to the nucleus. Functionally, probable transcriptional repressor. Acts downstream of snai1 in the specification of the neural crest and neural crest migration. This chain is Zinc finger protein SNAI2 (snai2), found in Xenopus laevis (African clawed frog).